We begin with the raw amino-acid sequence, 281 residues long: Proteasome subunit beta (281 aa).

The propeptide at 1–53 (MEANTRSTGRLPAAFLTPGSSSFMDFLSDQSPEMLPGNRSLPPLQGAVEAPHG) is removed in mature form; by autocatalysis. The active-site Nucleophile is the threonine 54.

The protein belongs to the peptidase T1B family. As to quaternary structure, the 20S proteasome core is composed of 14 alpha and 14 beta subunits that assemble into four stacked heptameric rings, resulting in a barrel-shaped structure. The two inner rings, each composed of seven catalytic beta subunits, are sandwiched by two outer rings, each composed of seven alpha subunits. The catalytic chamber with the active sites is on the inside of the barrel. Has a gated structure, the ends of the cylinder being occluded by the N-termini of the alpha-subunits. Is capped by the proteasome-associated ATPase, ARC.

Its subcellular location is the cytoplasm. It carries out the reaction Cleavage of peptide bonds with very broad specificity.. It functions in the pathway protein degradation; proteasomal Pup-dependent pathway. Its activity is regulated as follows. The formation of the proteasomal ATPase ARC-20S proteasome complex, likely via the docking of the C-termini of ARC into the intersubunit pockets in the alpha-rings, may trigger opening of the gate for substrate entry. Interconversion between the open-gate and close-gate conformations leads to a dynamic regulation of the 20S proteasome proteolysis activity. In terms of biological role, component of the proteasome core, a large protease complex with broad specificity involved in protein degradation. This is Proteasome subunit beta from Streptomyces griseus subsp. griseus (strain JCM 4626 / CBS 651.72 / NBRC 13350 / KCC S-0626 / ISP 5235).